The chain runs to 428 residues: Sporulation kinase C (428 aa).

Transmembrane regions (helical) follow at residues 8 to 28 (IISI…FYFI) and 36 to 56 (PVDI…AYYI). One can recognise a PAS domain in the interval 76-147 (LSEEKNRIMD…NTQIQNKASS (72 aa)). Residues 148–200 (GMFTAKYVTKNGTIFWGEVHYKLYYDRDDQFTGSLGTMSDITERKEAEDELIE) enclose the PAC domain. The Histidine kinase domain occupies 221–426 (GIAHEVRNPL…VFQVVLPLKS (206 aa)). Histidine 224 is modified (phosphohistidine; by autocatalysis).

Oligomerizes, probably forms homodimers; oligomerization is assisted by FloT. Interacts with FloT. Another study shows only rare colocalization with FloT or FloA membrane assemblies. KinC membrane assemblies are more mobile than FloT membrane assemblies.

It localises to the cell membrane. The protein resides in the membrane raft. The catalysed reaction is ATP + protein L-histidine = ADP + protein N-phospho-L-histidine.. Functionally, phosphorylates the sporulation-regulatory protein Spo0A a transcription factor that also controls biofilm formation. Requires FloT and FloA for localization to DRMs and for activity. The polypeptide is Sporulation kinase C (Bacillus subtilis (strain 168)).